Here is an 833-residue protein sequence, read N- to C-terminus: Leucine--tRNA ligase (833 aa).

Positions 41–52 (PYPSGAGLHVGH) match the 'HIGH' region motif. The 'KMSKS' region motif lies at 610-614 (KMSKS). An ATP-binding site is contributed by Lys-613.

It belongs to the class-I aminoacyl-tRNA synthetase family.

The protein localises to the cytoplasm. It carries out the reaction tRNA(Leu) + L-leucine + ATP = L-leucyl-tRNA(Leu) + AMP + diphosphate. The chain is Leucine--tRNA ligase from Streptococcus suis (strain 98HAH33).